Here is a 203-residue protein sequence, read N- to C-terminus: MSDEIEDRPRTRSRTPSVDTQSYTINEEAHHIITDSDSSSSENEDGEGNETNSSDDSSESGSVERFLDEIVPTTSTSFIPNDTPDPATLFDITEYIFDSIVQSTNACDFSEAFALQAKTSAVINSKSMELKNLIEQTKVRLPELQAKFKNGTQTLRTIRKNLDNAKSRIQVMNDVLQTDYPIEFNQARDKILERTLDSDEEVI.

Residues 1-62 (MSDEIEDRPR…SSDDSSESGS (62 aa)) form a disordered region. Residues 14–25 (RTPSVDTQSYTI) show a composition bias toward polar residues. Residues 49–61 (NETNSSDDSSESG) show a composition bias toward low complexity. The stretch at 126 to 178 (KSMELKNLIEQTKVRLPELQAKFKNGTQTLRTIRKNLDNAKSRIQVMNDVLQT) forms a coiled coil.

Belongs to the KXD1 family. As to quaternary structure, component of the biogenesis of lysosome-related organelles complex-1 (BLOC-1).

Its subcellular location is the endosome. In terms of biological role, component of the biogenesis of lysosome-related organelles complex-1 (BLOC-1) involved in endosomal cargo sorting. This is Biogenesis of lysosome-related organelles complex 1 subunit KXD1 (KXD1) from Candida glabrata (strain ATCC 2001 / BCRC 20586 / JCM 3761 / NBRC 0622 / NRRL Y-65 / CBS 138) (Yeast).